The primary structure comprises 862 residues: Protein argonaute-2 (862 aa).

Residues 232–351 form the PAZ domain; that stretch reads PVIEFMCEVL…LPLEVCNIVA (120 aa). 2 interaction with guide RNA regions span residues 314-319 and 527-569; these read YFKDRH and GKTP…LCLK. The Piwi domain occupies 520–821; the sequence is LVVVILPGKT…VAFRARYHLV (302 aa). An interaction with GW182 family members region spans residues 590-593; sequence FQQP. Asp-600 lines the a divalent metal cation pocket. The tract at residues 653–663 is interaction with GW182 family members; it reads LIQFYKSTRFK. Residue Asp-672 coordinates a divalent metal cation. Interaction with guide RNA stretches follow at residues 712–713, 756–764, and 793–815; these read KR, HAGIQGTSR, and YVRCTRSVSIPAPAYYAHLVAFR. Residue His-810 participates in a divalent metal cation binding. The disordered stretch occupies residues 825 to 847; the sequence is HDSAEGSHTSGQSNGRDQQALAK. The span at 830 to 841 shows a compositional bias: polar residues; the sequence is GSHTSGQSNGRD.

The protein belongs to the argonaute family. Ago subfamily. Component of the RISC loading complex (RLC), or micro-RNA (miRNA) loading complex (miRLC), which is composed of dicer1, ago2 and tarbp2. Note that the trimeric RLC/miRLC is also referred to as RISC. It depends on Mg(2+) as a cofactor. Requires Mn(2+) as cofactor.

It localises to the cytoplasm. It is found in the P-body. It catalyses the reaction Endonucleolytic cleavage to 5'-phosphomonoester.. Functionally, required for RNA-mediated gene silencing (RNAi) by the RNA-induced silencing complex (RISC). The 'minimal RISC' appears to include ago2 bound to a short guide RNA such as a microRNA (miRNA) or short interfering RNA (siRNA). These guide RNAs direct RISC to complementary mRNAs that are targets for RISC-mediated gene silencing. The precise mechanism of gene silencing depends on the degree of complementarity between the miRNA or siRNA and its target. Binding of RISC to a perfectly complementary mRNA generally results in silencing due to endonucleolytic cleavage of the mRNA specifically by ago2. Binding of RISC to a partially complementary mRNA results in silencing through inhibition of translation, and this is independent of endonuclease activity. The inhibition of translational initiation leads to the accumulation of the affected mRNA in cytoplasmic processing bodies (P-bodies), where mRNA degradation may subsequently occur. This is Protein argonaute-2 (ago2) from Xenopus laevis (African clawed frog).